Reading from the N-terminus, the 419-residue chain is Tyrosine--tRNA ligase (419 aa).

Position 36 (Tyr-36) interacts with L-tyrosine. The short motif at 41–50 is the 'HIGH' region element; the sequence is PTGDSMHIGH. Residues Tyr-168 and Gln-172 each contribute to the L-tyrosine site. Residues 230 to 234 carry the 'KMSKS' region motif; sequence KFGKT. Lys-233 is a binding site for ATP. In terms of domain architecture, S4 RNA-binding spans 352-419; that stretch reads KNIVDFLVDA…KKKYFLARVK (68 aa).

This sequence belongs to the class-I aminoacyl-tRNA synthetase family. TyrS type 1 subfamily. In terms of assembly, homodimer.

It is found in the cytoplasm. It catalyses the reaction tRNA(Tyr) + L-tyrosine + ATP = L-tyrosyl-tRNA(Tyr) + AMP + diphosphate + H(+). In terms of biological role, catalyzes the attachment of tyrosine to tRNA(Tyr) in a two-step reaction: tyrosine is first activated by ATP to form Tyr-AMP and then transferred to the acceptor end of tRNA(Tyr). This chain is Tyrosine--tRNA ligase, found in Latilactobacillus sakei subsp. sakei (strain 23K) (Lactobacillus sakei subsp. sakei).